The following is a 79-amino-acid chain: Acyl carrier protein (79 aa).

The Carrier domain maps to 2 to 77; the sequence is ENIEQRVKKI…QAIDYVTAHL (76 aa). O-(pantetheine 4'-phosphoryl)serine is present on Ser-37.

It belongs to the acyl carrier protein (ACP) family. Post-translationally, 4'-phosphopantetheine is transferred from CoA to a specific serine of apo-ACP by AcpS. This modification is essential for activity because fatty acids are bound in thioester linkage to the sulfhydryl of the prosthetic group.

The protein resides in the cytoplasm. Its pathway is lipid metabolism; fatty acid biosynthesis. Its function is as follows. Carrier of the growing fatty acid chain in fatty acid biosynthesis. The polypeptide is Acyl carrier protein (Laribacter hongkongensis (strain HLHK9)).